The primary structure comprises 191 residues: Small ribosomal subunit protein eS7z (191 aa).

M1 carries the post-translational modification N-acetylmethionine. A coiled-coil region spans residues 15–50; that stretch reads ELSELDEQVAQAFFDLENTNQELKSELKDLYVNSAV.

This sequence belongs to the eukaryotic ribosomal protein eS7 family.

This chain is Small ribosomal subunit protein eS7z (RPS7A), found in Arabidopsis thaliana (Mouse-ear cress).